Here is a 674-residue protein sequence, read N- to C-terminus: Carbon monoxide dehydrogenase/acetyl-CoA synthase subunit beta (674 aa).

The tract at residues 1–25 (MPRFRDLSHNCRPSEAPRVMEPKNR) is disordered. The [4Fe-4S] cluster site is built by C59, C67, C68, C71, C76, and C90. The [Ni-4Fe-4S] cluster site is built by H283, C317, C355, C470, C500, and C550.

In terms of assembly, tetramer of two alpha and two beta chains. [Ni-Fe-S] cluster is required as a cofactor. Requires [4Fe-4S] cluster as cofactor.

The enzyme catalyses CO + 2 oxidized [2Fe-2S]-[ferredoxin] + H2O = 2 reduced [2Fe-2S]-[ferredoxin] + CO2 + 2 H(+). In terms of biological role, the beta subunit (this protein) generates CO from CO(2), while the alpha subunit combines the CO with CoA and a methyl group to form acetyl-CoA. The methyl group, which is incorporated into acetyl-CoA, is transferred to the alpha subunit by a corrinoid iron-sulfur protein. The protein is Carbon monoxide dehydrogenase/acetyl-CoA synthase subunit beta of Moorella thermoacetica (Clostridium thermoaceticum).